Consider the following 246-residue polypeptide: 5'-nucleotidase SurE (246 aa).

A divalent metal cation-binding residues include aspartate 8, aspartate 9, serine 39, and asparagine 91.

This sequence belongs to the SurE nucleotidase family. The cofactor is a divalent metal cation.

The protein resides in the cytoplasm. The enzyme catalyses a ribonucleoside 5'-phosphate + H2O = a ribonucleoside + phosphate. Functionally, nucleotidase that shows phosphatase activity on nucleoside 5'-monophosphates. This Dechloromonas aromatica (strain RCB) protein is 5'-nucleotidase SurE.